A 448-amino-acid chain; its full sequence is Phosphoglucosamine mutase (448 aa).

The Phosphoserine intermediate role is filled by Ser100. 4 residues coordinate Mg(2+): Ser100, Asp240, Asp242, and Asp244. Phosphoserine is present on Ser100.

This sequence belongs to the phosphohexose mutase family. Mg(2+) serves as cofactor. Activated by phosphorylation.

The catalysed reaction is alpha-D-glucosamine 1-phosphate = D-glucosamine 6-phosphate. In terms of biological role, catalyzes the conversion of glucosamine-6-phosphate to glucosamine-1-phosphate. This is Phosphoglucosamine mutase from Clostridium tetani (strain Massachusetts / E88).